The chain runs to 135 residues: uncharacterized protein (135 aa).

A disordered region spans residues 1–70; the sequence is MKPDWPRRGA…RWRPQGTGTG (70 aa).

This is an uncharacterized protein from Homo sapiens (Human).